A 355-amino-acid polypeptide reads, in one-letter code: UDP-3-O-acylglucosamine N-acyltransferase (355 aa).

Catalysis depends on histidine 258, which acts as the Proton acceptor.

This sequence belongs to the transferase hexapeptide repeat family. LpxD subfamily. Homotrimer.

The catalysed reaction is a UDP-3-O-[(3R)-3-hydroxyacyl]-alpha-D-glucosamine + a (3R)-hydroxyacyl-[ACP] = a UDP-2-N,3-O-bis[(3R)-3-hydroxyacyl]-alpha-D-glucosamine + holo-[ACP] + H(+). It functions in the pathway bacterial outer membrane biogenesis; LPS lipid A biosynthesis. In terms of biological role, catalyzes the N-acylation of UDP-3-O-acylglucosamine using 3-hydroxyacyl-ACP as the acyl donor. Is involved in the biosynthesis of lipid A, a phosphorylated glycolipid that anchors the lipopolysaccharide to the outer membrane of the cell. This is UDP-3-O-acylglucosamine N-acyltransferase from Agrobacterium fabrum (strain C58 / ATCC 33970) (Agrobacterium tumefaciens (strain C58)).